A 233-amino-acid chain; its full sequence is Lipid A 4'-phosphatase (233 aa).

Met-1 is a topological domain (cytoplasmic). A helical transmembrane segment spans residues 2 to 22; the sequence is LLFWMWWALLAVFRAFPGIDI. Topologically, residues 23-60 are extracellular; that stretch reads YFSQLFFVGADCDATAAAGNICGGFPYRDVAAFDLLRT. The chain crosses the membrane as a helical span at residues 61–81; that stretch reads VFFRLPYVVAIVMVWKLVECY. The Cytoplasmic segment spans residues 82–94; it reads QQHGATFNAERAQ. Residues 95–115 traverse the membrane as a helical segment; sequence KLKVALGTLLIGPVLLVNVVL. The Extracellular portion of the chain corresponds to 116-149; it reads KEHWGRPRPIQTDIFGGALHFAEAGSLAGKCVSN. The helical transmembrane segment at 150–170 threads the bilayer; it reads CSFVSGEAASAGWLFCLLLFV. Residues 171-176 are Cytoplasmic-facing; the sequence is PKSLRY. The helical transmembrane segment at 177-197 threads the bilayer; the sequence is AVAAPLAAISILTPAMRLSFG. Over 198 to 200 the chain is Extracellular; sequence AHY. A helical membrane pass occupies residues 201–221; the sequence is LSDVVLGWLSSLVVFAALLAL. The Cytoplasmic portion of the chain corresponds to 222 to 233; that stretch reads TESQQHQKNSEI.

This sequence belongs to the lipid A LpxF 4'-phosphatase family.

Its subcellular location is the cell inner membrane. It participates in bacterial outer membrane biogenesis; LPS lipid A biosynthesis. In terms of biological role, removes the 4'-phosphate moiety from lipid IV(A) (a tetraacylated precursor of lipid A). This Rhizobium leguminosarum protein is Lipid A 4'-phosphatase.